Consider the following 21-residue polypeptide: Major outer membrane protein P44 (21 aa).

Monomer.

Its subcellular location is the cell outer membrane. This chain is Major outer membrane protein P44, found in Mannheimia haemolytica (Pasteurella haemolytica).